Here is a 635-residue protein sequence, read N- to C-terminus: Signal recognition particle subunit SRP72 (635 aa).

7 TPR repeats span residues 7–42 (GGLY…YPKE), 75–105 (GHVG…DKDD), 106–139 (VKAL…HSDD), 171–204 (YSQL…CRKS), 220–253 (DSIR…NHPD), 255–290 (SVKA…DQTK), and 436–469 (VEVE…QCRL). Positions 539 to 635 (KRKRKIRLPK…QKKKKNASKF (97 aa)) are disordered. Over residues 557-569 (DPERWLPRQERST) the composition is skewed to basic and acidic residues. Residues 625-635 (KQKKKKNASKF) are compositionally biased toward basic residues.

This sequence belongs to the SRP72 family. Heterodimer with srpa-68. Srpa-68-srpa-72 heterodimer formation is stabilized by the presence of 7SL RNA. Component of a signal recognition particle (SRP) complex that consists of a 7SL RNA molecule of 300 nucleotides and six protein subunits: srpa-72, srpa-68, SRP54, F37F2.2/SRP19, F25G6.8/SRP14 and ZK512.4/SRP9. Within the SRP complex, interacts (via N-terminus) with srpa-68 (via C-terminus).

It is found in the cytoplasm. The protein localises to the endoplasmic reticulum. Functionally, component of the signal recognition particle (SRP) complex, a ribonucleoprotein complex that mediates the cotranslational targeting of secretory and membrane proteins to the endoplasmic reticulum (ER). The SRP complex interacts with the signal sequence in nascent secretory and membrane proteins and directs them to the membrane of the ER. The SRP complex targets the ribosome-nascent chain complex to the SRP receptor (SR), which is anchored in the ER, where SR compaction and GTPase rearrangement drive cotranslational protein translocation into the ER. Binds the signal recognition particle RNA (7SL RNA) in presence of srpa-68. Can bind 7SL RNA with low affinity. The SRP complex possibly participates in the elongation arrest function. This chain is Signal recognition particle subunit SRP72, found in Caenorhabditis elegans.